The sequence spans 640 residues: Choline O-acetyltransferase (640 aa).

At Ser-17 the chain carries Phosphoserine. The Proton acceptor role is filled by His-334. At Ser-365 the chain carries Phosphoserine. Residues 412–424 (GKTF…YSPD), Ser-450, and Gln-551 contribute to the CoA site. The interval 614 to 640 (CSSRQPADSKPPAPKEKARGPSQAKQS) is disordered.

The protein belongs to the carnitine/choline acetyltransferase family. Monomer.

The enzyme catalyses choline + acetyl-CoA = acetylcholine + CoA. Its function is as follows. Catalyzes the reversible synthesis of acetylcholine (ACh) from acetyl CoA and choline at cholinergic synapses. In Rattus norvegicus (Rat), this protein is Choline O-acetyltransferase (Chat).